Reading from the N-terminus, the 139-residue chain is Peptide methionine sulfoxide reductase MsrB (139 aa).

The MsrB domain maps to 8 to 130; it reads DREWQRELSP…NSASLQLKTQ (123 aa). Zn(2+) contacts are provided by cysteine 47, cysteine 50, cysteine 96, and cysteine 99. Residue cysteine 119 is the Nucleophile of the active site.

It belongs to the MsrB Met sulfoxide reductase family. Requires Zn(2+) as cofactor.

It catalyses the reaction L-methionyl-[protein] + [thioredoxin]-disulfide + H2O = L-methionyl-(R)-S-oxide-[protein] + [thioredoxin]-dithiol. This Acinetobacter baumannii (strain SDF) protein is Peptide methionine sulfoxide reductase MsrB.